A 373-amino-acid polypeptide reads, in one-letter code: Protein translocase subunit SecF (373 aa).

6 consecutive transmembrane segments (helical) span residues 26-46 (IWYG…AVRG), 142-162 (WQGL…AFEW), 166-186 (LAAF…YALV), 193-213 (GTVI…VVVF), 251-271 (VVAL…LGAG), and 280-300 (LFVG…PLVA). Positions 322 to 332 (QGAAKGESAES) are enriched in low complexity. The tract at residues 322 to 373 (QGAAKGESAESAADEGAYDADEPDDAAPAVVGPRNQPASRGRGRGRPSGKRR) is disordered. Over residues 333 to 346 (AADEGAYDADEPDD) the composition is skewed to acidic residues. Residues 362–373 (GRGRGRPSGKRR) are compositionally biased toward basic residues.

Belongs to the SecD/SecF family. SecF subfamily. Forms a complex with SecD. Part of the essential Sec protein translocation apparatus which comprises SecA, SecYEG and auxiliary proteins SecDF. Other proteins may also be involved.

The protein resides in the cell membrane. Its function is as follows. Part of the Sec protein translocase complex. Interacts with the SecYEG preprotein conducting channel. SecDF uses the proton motive force (PMF) to complete protein translocation after the ATP-dependent function of SecA. This is Protein translocase subunit SecF from Streptomyces coelicolor (strain ATCC BAA-471 / A3(2) / M145).